A 346-amino-acid chain; its full sequence is MTTPSGSRPSIGITALGTYVPPRVVTNKDFEAHMDTSDEWIVSRTGIRERRFAAENEFTSDLGVRAVQDLLARDPDGLRDVDVVICATATPDALFPSTAALIAGQVGLSGAGAFDLSTACSGFVYALSMAQGLILGGTARRVLVVGAETLSRLVDQHDRSTAILFGDGAGAAVVGPVPQGHGFQEFVLGADSAGGPSLYARCMADRLPGGILMGERVGMNGREVFKFAVRVLGDSGQQVLDKSGLTSADVDWVIPHQANIRIIEAANERFGVPMSKTVVNIDRYGNTSSASLPLALREAVDDGRIQDGQQLLLVAFGGGLSWGACTVKWWAGAPSLTAAQQAEVTA.

Active-site residues include Cys-120 and His-256. The ACP-binding stretch occupies residues 257–261; the sequence is QANIR. Asn-286 is an active-site residue.

This sequence belongs to the thiolase-like superfamily. FabH family. In terms of assembly, homodimer.

It localises to the cytoplasm. It carries out the reaction malonyl-[ACP] + acetyl-CoA + H(+) = 3-oxobutanoyl-[ACP] + CO2 + CoA. It functions in the pathway lipid metabolism; fatty acid biosynthesis. In terms of biological role, catalyzes the condensation reaction of fatty acid synthesis by the addition to an acyl acceptor of two carbons from malonyl-ACP. Catalyzes the first condensation reaction which initiates fatty acid synthesis and may therefore play a role in governing the total rate of fatty acid production. Possesses both acetoacetyl-ACP synthase and acetyl transacylase activities. Its substrate specificity determines the biosynthesis of branched-chain and/or straight-chain of fatty acids. This chain is Beta-ketoacyl-[acyl-carrier-protein] synthase III, found in Deinococcus geothermalis (strain DSM 11300 / CIP 105573 / AG-3a).